Reading from the N-terminus, the 405-residue chain is uncharacterized protein (405 aa).

12 helical membrane-spanning segments follow: residues 32-52 (MFVL…VLAG), 53-73 (WLTF…GVLL), 84-104 (IDMI…WLGW), 108-128 (PVVC…IAGI), 150-170 (AVYS…VGWL), 171-191 (GPEA…VCLS), 237-257 (WGAL…VAAG), 260-280 (VVGL…LLAG), 291-311 (IMTA…AEFG), 314-334 (GLTI…VAML), 352-372 (ISIS…GVVI), and 378-398 (AIFV…LSIP).

This sequence belongs to the major facilitator superfamily.

The protein localises to the cell membrane. This is an uncharacterized protein from Sinorhizobium fredii (strain NBRC 101917 / NGR234).